The following is a 185-amino-acid chain: MINDIKKDAQERMGKSLEALDRNLASIRTGRAHPSILDSVKVPAWGSDMPLNQVAAITVEDARTLKIVAHDKNLSAAIEKAIMTSDLGLNPSSAGTTIRVPMPALTEETRKGYTKQARGVAEDAKVAVRNVRRDALAELKKLAKAKEISEDEERRAADELQKITDKFIADVDKALEVKEADLMAV.

This sequence belongs to the RRF family.

Its subcellular location is the cytoplasm. Functionally, responsible for the release of ribosomes from messenger RNA at the termination of protein biosynthesis. May increase the efficiency of translation by recycling ribosomes from one round of translation to another. The sequence is that of Ribosome-recycling factor from Ectopseudomonas mendocina (strain ymp) (Pseudomonas mendocina).